Consider the following 471-residue polypeptide: Monocarboxylate transporter 11 (471 aa).

The segment covering 1-13 has biased composition (basic residues); it reads MPAPQRKHRRGGF. Positions 1–31 are disordered; that stretch reads MPAPQRKHRRGGFSHRCFPTPQTAMTPQPAG. Residues 1-35 lie on the Cytoplasmic side of the membrane; that stretch reads MPAPQRKHRRGGFSHRCFPTPQTAMTPQPAGPPDG. The span at 19 to 28 shows a compositional bias: low complexity; that stretch reads PTPQTAMTPQ. 12 helical membrane-spanning segments follow: residues 36–56, 78–98, 106–126, 131–151, 163–183, 198–218, 243–263, 273–293, 312–332, 333–353, 367–389, and 407–427; these read GWGWVVAAAAFAINGLSYGLL, AWISALALAVQQAASPVGSAL, PVVMVGGVLASLGFVFSAFAS, LYLGLGLLAGFGWALVFAPAL, VLAVGLALTGNGASSLLLAPA, LLLGAITLHLTPCGALLLPLV, AFSIFALGTALVGGGYFVPYV, GLGGYGAALVVAVAAMGDAGA, LAVFGALTGLGLWVVGLVPVV, GGEESWGGPLLAAAVAYGLSA, LVGVGGVVQATGLVMMLMSLGGL, and ASFLLSGSLILSGSFIYIGLP. The Cytoplasmic portion of the chain corresponds to 428-471; that stretch reads RALPSCGPASPPATPPPETGELLPAPQAVLLSPGGPGSTLDTTC.

The protein belongs to the major facilitator superfamily. Monocarboxylate porter (TC 2.A.1.13) family. As to quaternary structure, interacts with isoform 2 of BSG. As to expression, expressed in liver, salivary gland and thyroid.

Its subcellular location is the endoplasmic reticulum membrane. It is found in the cell membrane. It carries out the reaction pyruvate(out) + H(+)(out) = pyruvate(in) + H(+)(in). Proton-linked monocarboxylate transporter. It catalyzes the transport of pyruvate across the plasma membrane. Probably involved in hepatic lipid metabolism: overexpression results in an increase of triacylglycerol(TAG) levels, small increases in intracellular diacylglycerols and decreases in lysophosphatidylcholine, cholesterol ester and sphingomyelin lipids. This Homo sapiens (Human) protein is Monocarboxylate transporter 11 (SLC16A11).